The following is a 387-amino-acid chain: Homoserine O-succinyltransferase (387 aa).

An AB hydrolase-1 domain is found at 45 to 354 (NAVLVCHALN…DAPHGHDAFL (310 aa)). S151 serves as the catalytic Nucleophile. R221 lines the substrate pocket. Catalysis depends on residues D317 and H350. D351 contacts substrate.

It belongs to the AB hydrolase superfamily. MetX family. In terms of assembly, homodimer.

The protein resides in the cytoplasm. It catalyses the reaction L-homoserine + succinyl-CoA = O-succinyl-L-homoserine + CoA. It participates in amino-acid biosynthesis; L-methionine biosynthesis via de novo pathway; O-succinyl-L-homoserine from L-homoserine: step 1/1. Functionally, transfers a succinyl group from succinyl-CoA to L-homoserine, forming succinyl-L-homoserine. The protein is Homoserine O-succinyltransferase of Methylibium petroleiphilum (strain ATCC BAA-1232 / LMG 22953 / PM1).